Reading from the N-terminus, the 551-residue chain is MGEINRRNFLKVSILGAAAAAVASASAVKGMVSPLVADAADIVAPITETSEFPYKVDAKYQRYNSLKNFFEKTFDPEANKTPIKFHYDDVSKITGKKDTGKDLPTLNAERLGIKGRPATHTETSILFHTQHLGAMLTQRHNETGWTGLDEALNAGAWAVEFDYSGFNATGGGPGSVIPLYPINPMTNEIANEPVMVPGLYNWDNIDVESVRQQGQQWKFESKEEASKIVKKATRLLGADLVGIAPYDERWTYSTWGRKIYKPCKMPNGRTKYLPWDLPKMLSGGGVEVFGHAKFEPDWEKYAGFKPKSVIVFVLEEDYEAIRTSPSVISSATVGKSYSNMAEVAYKIAVFLRKLGYYAAPCGNDTGISVPMAVQAGLGEAGRNGLLITQKFGPRHRIAKVYTDLELAPDKPRKFGVREFCRLCKKCADACPAQAISHEKDPKVLQPEDCEVAENPYTEKWHLDSNRCGSFWAYNGSPCSNCVAVCSWNKVETWNHDVARIATQIPLLQDAARKFDEWFGYNGPVNPDERLESGYVQNMVKDFWNNPESIKQ.

A signal peptide (tat-type signal) is located at residues 1 to 39; the sequence is MGEINRRNFLKVSILGAAAAAVASASAVKGMVSPLVADA. The 30-residue stretch at 411–440 folds into the 4Fe-4S ferredoxin-type 1 domain; sequence PRKFGVREFCRLCKKCADACPAQAISHEKD. [4Fe-4S] cluster contacts are provided by Cys420, Cys423, Cys426, Cys430, Cys467, Cys478, Cys481, and Cys485. The 4Fe-4S ferredoxin-type 2 domain maps to 478–496; the sequence is CSNCVAVCSWNKVETWNHD.

The protein belongs to the PceA family. Requires [4Fe-4S] cluster as cofactor. The cofactor is corrinoid. Predicted to be exported by the Tat system. The position of the signal peptide cleavage has not been experimentally proven.

The protein resides in the cell membrane. It carries out the reaction trichloroethene + chloride + A + H(+) = tetrachloroethene + AH2. The catalysed reaction is trichloroethene + AH2 = (Z)-1,2-dichloroethene + chloride + A + H(+). In terms of biological role, catalyzes the reductive dechlorination of tetrachloroethene (PCE) to trichloroethene (TCE) and of trichloroethene to cis-1,2-dichloroethene (DCE). This chain is Tetrachloroethene reductive dehalogenase, found in Desulfitobacterium hafniense (Desulfitobacterium frappieri).